The primary structure comprises 278 residues: Reaction center protein L chain (278 aa).

Transmembrane regions (helical) follow at residues 33 to 56 (GFFG…GATI), 90 to 118 (GLWQ…RKLG), and 121 to 146 (FHIP…ILMG). 2 residues coordinate (7R,8Z)-bacteriochlorophyll b: His-159 and His-179. The helical transmembrane segment at 176–205 (NPAHMLAITFFFTNCLALSMHGSLILSVTN) threads the bilayer. His-196 is a Fe cation binding site. Phe-222 provides a ligand contact to a ubiquinone. The helical transmembrane segment at 231–257 (GALAIHRLGLFLALSAVFWSAVCIVIS) threads the bilayer. Position 236 (His-236) interacts with Fe cation.

It belongs to the reaction center PufL/M/PsbA/D family. In terms of assembly, reaction center is composed of four bacteriochlorophylls, two bacteriopheophytins, two ubiquinones, one iron, and two highly hydrophobic polypeptide chains (designated L and M).

The protein resides in the cellular chromatophore membrane. The reaction center is a membrane-bound complex that mediates the initial photochemical event in the electron transfer process of photosynthesis. This is Reaction center protein L chain (pufL) from Allochromatium vinosum (strain ATCC 17899 / DSM 180 / NBRC 103801 / NCIMB 10441 / D) (Chromatium vinosum).